The primary structure comprises 279 residues: Large ribosomal subunit protein uL2 (279 aa).

Residues 223–279 are disordered; it reads PVAMNPVDHPMGGGEGRASGGHPRSRKGLPAKGFKTRSRTKASNKYIVERRKTRKKK. Positions 245–264 are enriched in basic residues; sequence PRSRKGLPAKGFKTRSRTKA.

This sequence belongs to the universal ribosomal protein uL2 family. As to quaternary structure, part of the 50S ribosomal subunit. Forms a bridge to the 30S subunit in the 70S ribosome.

Its function is as follows. One of the primary rRNA binding proteins. Required for association of the 30S and 50S subunits to form the 70S ribosome, for tRNA binding and peptide bond formation. It has been suggested to have peptidyltransferase activity; this is somewhat controversial. Makes several contacts with the 16S rRNA in the 70S ribosome. The protein is Large ribosomal subunit protein uL2 of Christiangramia forsetii (strain DSM 17595 / CGMCC 1.15422 / KT0803) (Gramella forsetii).